The following is a 423-amino-acid chain: 3-phosphoshikimate 1-carboxyvinyltransferase (423 aa).

3-phosphoshikimate-binding residues include Lys20, Ser21, and Arg25. Lys20 is a binding site for phosphoenolpyruvate. Residues Gly91 and Arg119 each coordinate phosphoenolpyruvate. 6 residues coordinate 3-phosphoshikimate: Thr163, Ser164, Gln165, Asp305, Gln328, and Lys332. Position 165 (Gln165) interacts with phosphoenolpyruvate. Asp305 (proton acceptor) is an active-site residue. The phosphoenolpyruvate site is built by Arg336 and Arg377.

It belongs to the EPSP synthase family. As to quaternary structure, monomer.

It is found in the cytoplasm. The catalysed reaction is 3-phosphoshikimate + phosphoenolpyruvate = 5-O-(1-carboxyvinyl)-3-phosphoshikimate + phosphate. Its pathway is metabolic intermediate biosynthesis; chorismate biosynthesis; chorismate from D-erythrose 4-phosphate and phosphoenolpyruvate: step 6/7. In terms of biological role, catalyzes the transfer of the enolpyruvyl moiety of phosphoenolpyruvate (PEP) to the 5-hydroxyl of shikimate-3-phosphate (S3P) to produce enolpyruvyl shikimate-3-phosphate and inorganic phosphate. This Acetivibrio thermocellus (strain ATCC 27405 / DSM 1237 / JCM 9322 / NBRC 103400 / NCIMB 10682 / NRRL B-4536 / VPI 7372) (Clostridium thermocellum) protein is 3-phosphoshikimate 1-carboxyvinyltransferase.